The primary structure comprises 523 residues: GMP synthase [glutamine-hydrolyzing] (523 aa).

The Glutamine amidotransferase type-1 domain occupies 9–198 (PVLVVDYGAQ…LTEIAGLEQN (190 aa)). Cys86 serves as the catalytic Nucleophile. Active-site residues include His172 and Glu174. Positions 199 to 397 (WTAANIAEEL…LGLPEVIVAR (199 aa)) constitute a GMPS ATP-PPase domain. 227–233 (SGGVDSA) is an ATP binding site.

In terms of assembly, homodimer.

The enzyme catalyses XMP + L-glutamine + ATP + H2O = GMP + L-glutamate + AMP + diphosphate + 2 H(+). The protein operates within purine metabolism; GMP biosynthesis; GMP from XMP (L-Gln route): step 1/1. In terms of biological role, catalyzes the synthesis of GMP from XMP. This is GMP synthase [glutamine-hydrolyzing] from Corynebacterium efficiens (strain DSM 44549 / YS-314 / AJ 12310 / JCM 11189 / NBRC 100395).